The primary structure comprises 211 residues: Uracil phosphoribosyltransferase (211 aa).

5-phospho-alpha-D-ribose 1-diphosphate is bound by residues arginine 79, arginine 104, and 131–139; that span reads DPMLATGGS. Uracil contacts are provided by residues isoleucine 196 and 201–203; that span reads GDA. Aspartate 202 lines the 5-phospho-alpha-D-ribose 1-diphosphate pocket.

Belongs to the UPRTase family. Requires Mg(2+) as cofactor.

It carries out the reaction UMP + diphosphate = 5-phospho-alpha-D-ribose 1-diphosphate + uracil. The protein operates within pyrimidine metabolism; UMP biosynthesis via salvage pathway; UMP from uracil: step 1/1. With respect to regulation, allosterically activated by GTP. Functionally, catalyzes the conversion of uracil and 5-phospho-alpha-D-ribose 1-diphosphate (PRPP) to UMP and diphosphate. This is Uracil phosphoribosyltransferase from Lactococcus lactis subsp. cremoris (strain MG1363).